The following is a 425-amino-acid chain: Protein PTI1 (425 aa).

Position 272 is a phosphoserine (S272).

As to quaternary structure, component of the cleavage and polyadenylation factor (CPF) complex, which is composed of PTI1, SYC1, SSU72, GLC7, MPE1, REF2, PFS2, PTA1, YSH1/BRR5, SWD2, CFT2/YDH1, YTH1, CFT1/YHH1, FIP1 and PAP1. Component of the APT complex, which is a subcomplex of CPF, and is composed of PTI1, SYC1, SSU72, GLC7, REF2, PTA1 and SWD2.

It is found in the nucleus. Functionally, component of the cleavage and polyadenylation factor (CPF) complex, which plays a key role in polyadenylation-dependent pre-mRNA 3'-end formation and cooperates with cleavage factors including the CFIA complex and NAB4/CFIB. Component of the APT complex, which may be involved in polyadenylation-independent transcript 3'-end formation. PTI1 is required for 3'-end formation of snoRNAs. This chain is Protein PTI1 (PTI1), found in Saccharomyces cerevisiae (strain ATCC 204508 / S288c) (Baker's yeast).